A 175-amino-acid polypeptide reads, in one-letter code: Probable coatomer subunit zeta-A (175 aa).

It belongs to the adaptor complexes small subunit family. In terms of assembly, oligomeric complex that consists of at least the alpha, beta, beta', gamma, delta, epsilon and zeta subunits.

It is found in the cytoplasm. The protein resides in the golgi apparatus membrane. It localises to the cytoplasmic vesicle. The protein localises to the COPI-coated vesicle membrane. Functionally, the coatomer is a cytosolic protein complex that binds to dilysine motifs and reversibly associates with Golgi non-clathrin-coated vesicles, which further mediate biosynthetic protein transport from the ER, via the Golgi up to the trans Golgi network. Coatomer complex is required for budding from Golgi membranes, and is essential for the retrograde Golgi-to-ER transport of dilysine-tagged proteins. The zeta subunit may be involved in regulating the coat assembly and, hence, the rate of biosynthetic protein transport due to its association-dissociation properties with the coatomer complex. The protein is Probable coatomer subunit zeta-A (copZa) of Dictyostelium discoideum (Social amoeba).